A 333-amino-acid polypeptide reads, in one-letter code: Flotillin-like protein FloA (333 aa).

A run of 2 helical transmembrane segments spans residues 8 to 28 (LMPIILLALALILISVVFTFI) and 30 to 50 (VGLWISALAAGVNVGIFTLVG).

This sequence belongs to the flotillin-like FloA family. As to quaternary structure, homooligomerizes.

The protein resides in the cell membrane. It localises to the membrane raft. Found in functional membrane microdomains (FMM) that may be equivalent to eukaryotic membrane rafts. FMMs are highly dynamic and increase in number as cells age. Flotillins are thought to be important factors in membrane fluidity. This Desulfitobacterium hafniense (strain DSM 10664 / DCB-2) protein is Flotillin-like protein FloA.